We begin with the raw amino-acid sequence, 778 residues long: Endonuclease MutS2 (778 aa).

332–339 (GPNTGGKT) provides a ligand contact to ATP. Residues 703–778 (IDLRGKMVDE…GLGCTVVTLK (76 aa)) enclose the Smr domain.

Belongs to the DNA mismatch repair MutS family. MutS2 subfamily. As to quaternary structure, homodimer. Binds to stalled ribosomes, contacting rRNA.

In terms of biological role, endonuclease that is involved in the suppression of homologous recombination and thus may have a key role in the control of bacterial genetic diversity. Its function is as follows. Acts as a ribosome collision sensor, splitting the ribosome into its 2 subunits. Detects stalled/collided 70S ribosomes which it binds and splits by an ATP-hydrolysis driven conformational change. Acts upstream of the ribosome quality control system (RQC), a ribosome-associated complex that mediates the extraction of incompletely synthesized nascent chains from stalled ribosomes and their subsequent degradation. Probably generates substrates for RQC. The protein is Endonuclease MutS2 of Fusobacterium nucleatum subsp. nucleatum (strain ATCC 25586 / DSM 15643 / BCRC 10681 / CIP 101130 / JCM 8532 / KCTC 2640 / LMG 13131 / VPI 4355).